Here is a 155-residue protein sequence, read N- to C-terminus: DNA-directed RNA polymerases I, II, and III subunit RPABC2 (155 aa).

Positions 1 to 19 (MSDYEEAFNDGNENFEDFD) are enriched in acidic residues. The disordered stretch occupies residues 1 to 57 (MSDYEEAFNDGNENFEDFDVEHFSDEETYEEKPQFKDGETTDANGKTIVTGGNGPED). A compositionally biased stretch (basic and acidic residues) spans 20-39 (VEHFSDEETYEEKPQFKDGE). A Phosphoserine modification is found at S24. The interval 111–132 (LEGETDPLRIAMKELAEKKIPL) is leucine-zipper.

Belongs to the archaeal Rpo6/eukaryotic RPB6 RNA polymerase subunit family. As to quaternary structure, component of the RNA polymerase I (Pol I), RNA polymerase II (Pol II) and RNA polymerase III (Pol III) complexes. Component of the RNA polymerase I (Pol I) complex consisting of 14 subunits: RPA135, RPA190, RPC40, RPA14, RPB5, RPO26, RPA43, RPB8, RPA12, RPB10, RPC19, RPC10, RPA49 and RPA34. The complex is composed of a horseshoe-shaped core containing ten subunits (RPA135, RPA190, RPB5, RPO26, RPB8, RPB10, RPC10, RPA12, RPC19 and RPC40) where RPA135 and RPA190 form the DNA-binding cleft. Outside of the core, RPA14 and RPA43 form the stalk that mediates interactions with transcription initiation factors and newly synthesized RNA. Component of the RNA polymerase II (Pol II) complex consisting of 12 subunits: RPO21, RPB2, RPB3, RPB4, RPB5, RPO26, RPB7, RPB8, RPB9, RPB10 and RPC10. Component of the RNA polymerase III (Pol III) complex consisting of 17 subunits.

It is found in the cytoplasm. It localises to the nucleus. DNA-dependent RNA polymerases catalyze the transcription of DNA into RNA using the four ribonucleoside triphosphates as substrates. Common component of RNA polymerases I, II and III which synthesize ribosomal RNA precursors, mRNA precursors and many functional non-coding RNAs, and small RNAs, such as 5S rRNA and tRNAs, respectively. Pol II is the central component of the basal RNA polymerase II transcription machinery. RNA polymerases are composed of mobile elements that move relative to each other. In Pol II, RPB6 is part of the clamp element and together with parts of RPB1 and RPB2 forms a pocket to which the RPB4-RPB7 subcomplex binds. This chain is DNA-directed RNA polymerases I, II, and III subunit RPABC2 (RPO26), found in Saccharomyces cerevisiae (strain ATCC 204508 / S288c) (Baker's yeast).